Reading from the N-terminus, the 137-residue chain is uncharacterized protein (137 aa).

The region spanning 5 to 136 (NRHLIHQINQ…FSHLFRMFLQ (132 aa)) is the HTH marR-type domain. The H-T-H motif DNA-binding region spans 51-74 (QKEIWSYLNVEAPTVTRTIKRLEE).

This is an uncharacterized protein from Bacillus subtilis (strain 168).